A 595-amino-acid chain; its full sequence is Aspartate--tRNA ligase (595 aa).

Glu-180 provides a ligand contact to L-aspartate. The interval 204–207 (QLFK) is aspartate. Arg-226 is an L-aspartate binding site. ATP contacts are provided by residues 226-228 (RDE) and Gln-235. His-454 contributes to the L-aspartate binding site. An ATP-binding site is contributed by Glu-488. An L-aspartate-binding site is contributed by Arg-495. ATP is bound at residue 540–543 (GLDR).

Belongs to the class-II aminoacyl-tRNA synthetase family. Type 1 subfamily. In terms of assembly, homodimer.

It is found in the cytoplasm. It carries out the reaction tRNA(Asp) + L-aspartate + ATP = L-aspartyl-tRNA(Asp) + AMP + diphosphate. Catalyzes the attachment of L-aspartate to tRNA(Asp) in a two-step reaction: L-aspartate is first activated by ATP to form Asp-AMP and then transferred to the acceptor end of tRNA(Asp). This is Aspartate--tRNA ligase from Clostridium acetobutylicum (strain ATCC 824 / DSM 792 / JCM 1419 / IAM 19013 / LMG 5710 / NBRC 13948 / NRRL B-527 / VKM B-1787 / 2291 / W).